A 283-amino-acid polypeptide reads, in one-letter code: 4-hydroxy-tetrahydrodipicolinate synthase (283 aa).

Residue Thr46 participates in pyruvate binding. The active-site Proton donor/acceptor is Tyr134. Lys162 serves as the catalytic Schiff-base intermediate with substrate. Ile208 is a binding site for pyruvate.

This sequence belongs to the DapA family. In terms of assembly, homotetramer; dimer of dimers.

The protein localises to the cytoplasm. It carries out the reaction L-aspartate 4-semialdehyde + pyruvate = (2S,4S)-4-hydroxy-2,3,4,5-tetrahydrodipicolinate + H2O + H(+). The protein operates within amino-acid biosynthesis; L-lysine biosynthesis via DAP pathway; (S)-tetrahydrodipicolinate from L-aspartate: step 3/4. Catalyzes the condensation of (S)-aspartate-beta-semialdehyde [(S)-ASA] and pyruvate to 4-hydroxy-tetrahydrodipicolinate (HTPA). In Methanothermobacter thermautotrophicus (strain ATCC 29096 / DSM 1053 / JCM 10044 / NBRC 100330 / Delta H) (Methanobacterium thermoautotrophicum), this protein is 4-hydroxy-tetrahydrodipicolinate synthase.